The following is a 512-amino-acid chain: ATP synthase subunit alpha (512 aa).

Residue 169 to 176 participates in ATP binding; it reads GDRQTGKT.

Belongs to the ATPase alpha/beta chains family. As to quaternary structure, F-type ATPases have 2 components, CF(1) - the catalytic core - and CF(0) - the membrane proton channel. CF(1) has five subunits: alpha(3), beta(3), gamma(1), delta(1), epsilon(1). CF(0) has four main subunits: a(1), b(1), b'(1) and c(9-12).

Its subcellular location is the cell inner membrane. The catalysed reaction is ATP + H2O + 4 H(+)(in) = ADP + phosphate + 5 H(+)(out). Its function is as follows. Produces ATP from ADP in the presence of a proton gradient across the membrane. The alpha chain is a regulatory subunit. This chain is ATP synthase subunit alpha, found in Roseobacter denitrificans (strain ATCC 33942 / OCh 114) (Erythrobacter sp. (strain OCh 114)).